The sequence spans 486 residues: ATP synthase subunit beta (486 aa).

170-177 (GGAGVGKT) contacts ATP.

It belongs to the ATPase alpha/beta chains family. F-type ATPases have 2 components, CF(1) - the catalytic core - and CF(0) - the membrane proton channel. CF(1) has five subunits: alpha(3), beta(3), gamma(1), delta(1), epsilon(1). CF(0) has three main subunits: a(1), b(2) and c(9-12). The alpha and beta chains form an alternating ring which encloses part of the gamma chain. CF(1) is attached to CF(0) by a central stalk formed by the gamma and epsilon chains, while a peripheral stalk is formed by the delta and b chains.

The protein localises to the cell membrane. It carries out the reaction ATP + H2O + 4 H(+)(in) = ADP + phosphate + 5 H(+)(out). Functionally, produces ATP from ADP in the presence of a proton gradient across the membrane. The catalytic sites are hosted primarily by the beta subunits. This is ATP synthase subunit beta from Clavibacter michiganensis subsp. michiganensis (strain NCPPB 382).